A 124-amino-acid polypeptide reads, in one-letter code: Histone H2A (124 aa).

Residues 1-18 (MSGRGKSGKARTKAKSRS) are compositionally biased toward basic residues. The interval 1-21 (MSGRGKSGKARTKAKSRSSRA) is disordered. Serine 2 carries the N-acetylserine modification. Serine 2 is subject to Phosphoserine. N5-methylglutamine is present on glutamine 104. A Glycyl lysine isopeptide (Lys-Gly) (interchain with G-Cter in ubiquitin) cross-link involves residue lysine 119.

The protein belongs to the histone H2A family. In terms of assembly, the nucleosome is a histone octamer containing two molecules each of H2A, H2B, H3 and H4 assembled in one H3-H4 heterotetramer and two H2A-H2B heterodimers. The octamer wraps approximately 147 bp of DNA. Monoubiquitination of Lys-119 gives a specific tag for epigenetic transcriptional repression. In terms of processing, phosphorylation of Ser-2 directly represses transcription.

The protein resides in the nucleus. The protein localises to the chromosome. Functionally, core component of nucleosome. Nucleosomes wrap and compact DNA into chromatin, limiting DNA accessibility to the cellular machineries which require DNA as a template. Histones thereby play a central role in transcription regulation, DNA repair, DNA replication and chromosomal stability. DNA accessibility is regulated via a complex set of post-translational modifications of histones, also called histone code, and nucleosome remodeling. This Paracentrotus lividus (Common sea urchin) protein is Histone H2A.